A 1265-amino-acid chain; its full sequence is 5-oxoprolinase (1265 aa).

This sequence belongs to the oxoprolinase family. Homodimer.

Its subcellular location is the cytoplasm. The protein localises to the cytosol. The catalysed reaction is 5-oxo-L-proline + ATP + 2 H2O = L-glutamate + ADP + phosphate + H(+). In terms of biological role, catalyzes the cleavage of 5-oxo-L-proline to form L-glutamate coupled to the hydrolysis of ATP to ADP and inorganic phosphate. The chain is 5-oxoprolinase (oplah) from Dictyostelium discoideum (Social amoeba).